The primary structure comprises 1401 residues: DNA-directed RNA polymerase subunit beta' (1401 aa).

The Zn(2+) site is built by Cys-71, Cys-73, Cys-86, and Cys-89. Residues Asp-462, Asp-464, and Asp-466 each coordinate Mg(2+). Positions 810, 884, 891, and 894 each coordinate Zn(2+). The interval 1377–1401 (RRKGTGAESATPMLADMANDPAAAE) is disordered.

The protein belongs to the RNA polymerase beta' chain family. In terms of assembly, the RNAP catalytic core consists of 2 alpha, 1 beta, 1 beta' and 1 omega subunit. When a sigma factor is associated with the core the holoenzyme is formed, which can initiate transcription. Mg(2+) serves as cofactor. Zn(2+) is required as a cofactor.

It catalyses the reaction RNA(n) + a ribonucleoside 5'-triphosphate = RNA(n+1) + diphosphate. Functionally, DNA-dependent RNA polymerase catalyzes the transcription of DNA into RNA using the four ribonucleoside triphosphates as substrates. The sequence is that of DNA-directed RNA polymerase subunit beta' from Rhizobium meliloti (strain 1021) (Ensifer meliloti).